Here is a 287-residue protein sequence, read N- to C-terminus: MLVARTKKELLDALTPLHTQQRSIGLVPTMGALHSGHASLVAKAREENDVVVTSIFVNPLQFEALGDCDDYRNYPRQLDADVALLEAEGVDVVFAPDVEEMYGPTGLPMLWVRTGEMGERLEGASRPGHFDGVATVVAKLFNLVRPDRAYFGQKDAQQVAVIRRLVRDLDFPLEIRAVPIIRAADGLAESSRNQRLSGADRAAALVLPRVLFDLEERAATGQPLDIEGARAQLRAAQGVRLDHLELVDAATLEPLTVTGALDRPALVVAAIHVGQVRLIDNIELTPR.

Position 30-37 (30-37) interacts with ATP; the sequence is MGALHSGH. The active-site Proton donor is the H37. Position 61 (Q61) interacts with (R)-pantoate. Beta-alanine is bound at residue Q61. 152–155 is an ATP binding site; it reads GQKD. Residue Q158 coordinates (R)-pantoate. ATP contacts are provided by residues I181 and 189–192; that span reads ESSR.

This sequence belongs to the pantothenate synthetase family. As to quaternary structure, homodimer.

Its subcellular location is the cytoplasm. It carries out the reaction (R)-pantoate + beta-alanine + ATP = (R)-pantothenate + AMP + diphosphate + H(+). The protein operates within cofactor biosynthesis; (R)-pantothenate biosynthesis; (R)-pantothenate from (R)-pantoate and beta-alanine: step 1/1. Catalyzes the condensation of pantoate with beta-alanine in an ATP-dependent reaction via a pantoyl-adenylate intermediate. This chain is Pantothenate synthetase, found in Corynebacterium efficiens (strain DSM 44549 / YS-314 / AJ 12310 / JCM 11189 / NBRC 100395).